Consider the following 241-residue polypeptide: Fatty acid metabolism regulator protein (241 aa).

Residues 6–74 (KGPASFAEKY…HGKPTRVNNF (69 aa)) enclose the HTH gntR-type domain. The segment at residues 34-53 (ERELSELIGVTRTTLREVLQ) is a DNA-binding region (H-T-H motif).

As to quaternary structure, homodimer.

Its subcellular location is the cytoplasm. Functionally, multifunctional regulator of fatty acid metabolism. The polypeptide is Fatty acid metabolism regulator protein (Shewanella sp. (strain ANA-3)).